The primary structure comprises 404 residues: Neutral protease 2 homolog AFLA_065450 (404 aa).

An N-terminal signal peptide occupies residues 1–19; it reads MRFISASSLLLALAPTLNA. Positions 20 to 185 are excised as a propeptide; sequence VPVEVAGSAQ…TQAVKILERR (166 aa). 2 disulfides stabilise this stretch: Cys191-Cys263 and Cys270-Cys288. Residue His313 coordinates Zn(2+). Glu314 is a catalytic residue. Zn(2+)-binding residues include His317 and Asp328.

This sequence belongs to the peptidase M35 family. It depends on Zn(2+) as a cofactor.

It localises to the secreted. It catalyses the reaction Preferential cleavage of bonds with hydrophobic residues in P1'. Also 3-Asn-|-Gln-4 and 8-Gly-|-Ser-9 bonds in insulin B chain.. Its function is as follows. Secreted metalloproteinase that allows assimilation of proteinaceous substrates. Shows high activities on basic nuclear substrates such as histone and protamine. The polypeptide is Neutral protease 2 homolog AFLA_065450 (Aspergillus flavus (strain ATCC 200026 / FGSC A1120 / IAM 13836 / NRRL 3357 / JCM 12722 / SRRC 167)).